The following is a 611-amino-acid chain: MITSQLLPALTLVLLLFKEGGAWSYNASTEAMTFDEASTYCQQRYTHLVAIQNQEEIKYLNSMFTYTPTYYWIGIRKVNKKWTWIGTQKLLTEEAKNWAPGEPNNKQNDEDCVEIYIKRDKDSGKWNDERCDKKKLALCYTAACTPTSCSGHGECVETVNNYTCKCHPGFRGLRCEQVVTCQAQEAPEHGSLVCTHPLGTFSYNSSCFVSCDKGYLPSSTEATQCTSTGEWSASPPACNVVECSALTNPCHGVMDCLQSSGNFPWNMTCTFECEEGFELMGPKRLQCTSSGNWDNRKPTCKAVTCGAIGHPQNGSVSCSHSPAGEFSVRSSCNFTCNEGFLMQGPAQIECTAQGQWSQQVPVCKASQCKALSSPERGYMSCLPGASGSFQSGSSCEFFCEKGFVLKGSKTLQCGLTGKWDSEEPTCEAVKCDAVQQPQDGLVRCAHSSTGEFTYKSSCAFSCEEGFELHGSAQLECTSQGQGVTGGPSCQVVQCFKSGSFRKDEHKLQGEPVFGAVCAFACPEGWTLNGSAALMCDATGHWSGMLPTCEAPTESSIPLAVGLTAGGTSLLTVASFLLWLLKRLRKRAKKFVPASSCQSLQSDGSYHMPCSI.

The signal sequence occupies residues 1-22 (MITSQLLPALTLVLLLFKEGGA). A C-type lectin domain is found at 23–140 (WSYNASTEAM…CDKKKLALCY (118 aa)). Over 23–557 (WSYNASTEAM…CEAPTESSIP (535 aa)) the chain is Extracellular. A glycan (N-linked (GlcNAc...) asparagine) is linked at asparagine 26. Intrachain disulfides connect cysteine 41–cysteine 139, cysteine 112–cysteine 131, cysteine 144–cysteine 155, cysteine 149–cysteine 164, cysteine 166–cysteine 175, cysteine 181–cysteine 225, cysteine 194–cysteine 207, cysteine 211–cysteine 238, cysteine 243–cysteine 287, cysteine 256–cysteine 269, cysteine 273–cysteine 300, cysteine 305–cysteine 350, cysteine 336–cysteine 363, cysteine 368–cysteine 413, cysteine 399–cysteine 426, cysteine 431–cysteine 476, cysteine 462–cysteine 489, cysteine 494–cysteine 535, and cysteine 521–cysteine 548. 3 residues coordinate Ca(2+): glutamate 102, asparagine 104, and glutamate 110. A carbohydrate contacts are provided by residues 102 to 110 (EPNNKQNDE), 114 to 119 (EIYIKR), and 127 to 129 (NDE). Ca(2+) contacts are provided by asparagine 127 and aspartate 128. Positions 141–176 (TAACTPTSCSGHGECVETVNNYTCKCHPGFRGLRCE) constitute an EGF-like domain. Asparagine 161 carries an N-linked (GlcNAc...) asparagine glycan. 2 consecutive Sushi domains span residues 179-240 (VTCQ…ACNV) and 241-302 (VECS…TCKA). Asparagine 204 is a glycosylation site (N-linked (GlcNAc...) asparagine). Residue asparagine 266 is glycosylated (N-linked (GlcNAc...) asparagine). 2 N-linked (GlcNAc...) asparagine glycosylation sites follow: asparagine 313 and asparagine 333. 4 Sushi domains span residues 316 to 365 (VSCS…VCKA), 367 to 428 (QCKA…TCEA), 430 to 491 (KCDA…SCQV), and 492 to 550 (VQCF…TCEA). Residue asparagine 528 is glycosylated (N-linked (GlcNAc...) asparagine). A helical transmembrane segment spans residues 558–579 (LAVGLTAGGTSLLTVASFLLWL). Residues 580–611 (LKRLRKRAKKFVPASSCQSLQSDGSYHMPCSI) are Cytoplasmic-facing.

Belongs to the selectin/LECAM family. Interacts with SELPLG/PSGL1 and PODXL2 through the sialyl Lewis X epitope. SELPLG sulfation appears not to be required for this interaction.

Its subcellular location is the cell membrane. Functionally, cell-surface glycoprotein having a role in immunoadhesion. Mediates in the adhesion of blood neutrophils in cytokine-activated endothelium through interaction with SELPLG/PSGL1. May have a role in capillary morphogenesis. The protein is E-selectin (SELE) of Canis lupus familiaris (Dog).